The primary structure comprises 330 residues: Probable WRKY transcription factor 39 (330 aa).

A DNA-binding region (WRKY) is located at residues 256 to 322 (KIADIPPDEY…YEGEHNHSRI (67 aa)).

The protein resides in the nucleus. Functionally, transcription factor. Interacts specifically with the W box (5'-(T)TGAC[CT]-3'), a frequently occurring elicitor-responsive cis-acting element. The polypeptide is Probable WRKY transcription factor 39 (WRKY39) (Arabidopsis thaliana (Mouse-ear cress)).